A 663-amino-acid chain; its full sequence is F-box protein DAS1 (663 aa).

The 46-residue stretch at 46-91 (VFPLTKLPDELMQEVFSHLPQPDRLQLCLVNKRLNKIATKLLYRRI) folds into the F-box domain.

As to quaternary structure, interacts with SKP1. Component of the probable SCF(DAS1) complex containing CDC53, SKP1, RBX1 and DAS1.

It participates in protein modification; protein ubiquitination. Functionally, substrate recognition component of a SCF (SKP1-CUL1-F-box protein) E3 ubiquitin-protein ligase complex which mediates the ubiquitination and subsequent proteasomal degradation of target proteins. Probably recognizes and binds to phosphorylated target proteins. The protein is F-box protein DAS1 (DAS1) of Saccharomyces cerevisiae (strain ATCC 204508 / S288c) (Baker's yeast).